The primary structure comprises 56 residues: uncharacterized protein (56 aa).

4Fe-4S ferredoxin-type domains are found at residues V2–E28 and H29–E56. [4Fe-4S] cluster contacts are provided by C9, C12, C15, C19, C38, C41, C44, and C48.

It depends on [4Fe-4S] cluster as a cofactor.

Functionally, ferredoxins are iron-sulfur proteins that transfer electrons in a wide variety of metabolic reactions. This is an uncharacterized protein from Methanocaldococcus jannaschii (strain ATCC 43067 / DSM 2661 / JAL-1 / JCM 10045 / NBRC 100440) (Methanococcus jannaschii).